We begin with the raw amino-acid sequence, 148 residues long: MLSCWVLLLALLGGACALPAPLGYSQALAQAVDSYNQRPEVQNAFRLLSADPEPGPNVQLSSLHNLNFTIMETRCQARSGAQLDSCEFKEDGLVKDCAAPVVLQGGRAVLDVTCVDSMADPVRVKRVWPLVIRTVIAGYNLYRAIKKK.

The first 17 residues, 1–17 (MLSCWVLLLALLGGACA), serve as a signal peptide directing secretion. Residues 18–122 (LPAPLGYSQA…TCVDSMADPV (105 aa)) constitute a propeptide that is removed on maturation. 2 disulfides stabilise this stretch: C75–C86 and C97–C114.

It belongs to the cathelicidin family. Detected in gizzard, liver, small intestine, large intestine, cloaca, bursa of Fabricius, gall bladder, lung, trachea, kidney, testis and bone marrow.

Its subcellular location is the secreted. Functionally, binds bacterial lipopolysaccharide (LPS). Has potent antimicrobial activity against Gram-positive and Gram-negative bacteria (in vitro). Has hemolytic activity (in vitro). May play a role in the innate immune response. The chain is Cathelicidin-1 (CATHL1) from Gallus gallus (Chicken).